Here is a 388-residue protein sequence, read N- to C-terminus: GTPase Obg (388 aa).

One can recognise an Obg domain in the interval 1–159; sequence MKFVDEAVIR…RSLKLELLLL (159 aa). In terms of domain architecture, OBG-type G spans 160–333; it reads ADVGLLGMPN…LALKLLDYIA (174 aa). GTP-binding positions include 166-173, 191-195, 213-216, 283-286, and 314-316; these read GMPNAGKS, FTTLV, DIPG, NKTD, and SAY. Mg(2+) contacts are provided by serine 173 and threonine 193.

This sequence belongs to the TRAFAC class OBG-HflX-like GTPase superfamily. OBG GTPase family. In terms of assembly, monomer. Mg(2+) serves as cofactor.

The protein localises to the cytoplasm. In terms of biological role, an essential GTPase which binds GTP, GDP and possibly (p)ppGpp with moderate affinity, with high nucleotide exchange rates and a fairly low GTP hydrolysis rate. Plays a role in control of the cell cycle, stress response, ribosome biogenesis and in those bacteria that undergo differentiation, in morphogenesis control. The chain is GTPase Obg from Shewanella putrefaciens (strain CN-32 / ATCC BAA-453).